Here is a 226-residue protein sequence, read N- to C-terminus: Aspartyl protease inhibitor (226 aa).

An N-terminal signal peptide occupies residues 1–15; sequence MKLLFLCALIALTAA. 2 disordered regions span residues 95-116 and 196-218; these read GKKG…KKPS and EAKQ…QPNV. A disulfide bridge links cysteine 131 with cysteine 222.

This sequence belongs to the protease inhibitor I33 family.

The protein localises to the secreted. Aspartyl protease inhibitor. This is Aspartyl protease inhibitor from Parelaphostrongylus tenuis (Meningeal worm).